Here is a 507-residue protein sequence, read N- to C-terminus: Monocarboxylate transporter 9 (507 aa).

Topologically, residues 1–12 (MVYRKPPDGGWG) are extracellular. Residues 13 to 33 (WVIVIVSFFTQFLCYGSPLAV) traverse the membrane as a helical segment. Residues 34–52 (GVLYLEWLDAFGEGKGKTA) lie on the Cytoplasmic side of the membrane. Residues 53–73 (WVGSLANGIGLLASPVCSICV) form a helical membrane-spanning segment. Topologically, residues 74 to 79 (SSFGAR) are extracellular. The helical transmembrane segment at 80–100 (PVAIFSGFMVAGGLMMSSFAP) threads the bilayer. The Cytoplasmic segment spans residues 101–102 (NI). Residues 103 to 123 (YFLYLSYGIVVGLGCGLLYNA) form a helical membrane-spanning segment. At 124-136 (TVTITCQYFDKRR) the chain is on the extracellular side. Residues 137-157 (GLALGLISTGSSVGLFIYAAL) traverse the membrane as a helical segment. At 158 to 163 (QRELIE) the chain is on the cytoplasmic side. A helical membrane pass occupies residues 164-184 (LYGLDGCLLIVGALSLNILAC). Topologically, residues 185–302 (GSLMRPLESS…EETVVLFKNR (118 aa)) are extracellular. A helical transmembrane segment spans residues 303–323 (VFSALFFAILLFDIGGFPPSL). Residues 324–340 (LMEDIARSANINEEDYH) are Cytoplasmic-facing. The chain crosses the membrane as a helical span at residues 341 to 361 (MPLVSIIGIMTAIGKLILGIL). The Extracellular portion of the chain corresponds to 362 to 369 (ADFKWVNT). Residues 370–390 (LYLYVLTLLMMGAALLAIPFA) form a helical membrane-spanning segment. Residues 391–395 (RSYFT) are Cytoplasmic-facing. The helical transmembrane segment at 396–416 (LAVLSGILGFLTGNWSIFPYV) threads the bilayer. Over 417-430 (TTKTVGIEKLTHAY) the chain is Extracellular. Residues 431 to 451 (GILMFFAGLGNSLGPPIVGWF) traverse the membrane as a helical segment. Residues 452-460 (YDWTQEYDT) lie on the Cytoplasmic side of the membrane. A helical transmembrane segment spans residues 461 to 481 (AFYFSGFCVLLGGFLLLLAAL). The Extracellular portion of the chain corresponds to 482–507 (PCWNACTDRSSKLPPNTYSYKVASSA).

It belongs to the major facilitator superfamily. Monocarboxylate porter (TC 2.A.1.13) family.

It is found in the cell membrane. It catalyses the reaction creatine(in) = creatine(out). The catalysed reaction is (R)-carnitine(in) = (R)-carnitine(out). In terms of biological role, extracellular pH-and Na(+)-sensitive low-affinity creatine transporter. Also functions as a pH-independent carnitine efflux transporter. The sequence is that of Monocarboxylate transporter 9 (SLC16A9) from Gallus gallus (Chicken).